The sequence spans 370 residues: DNA replication and repair protein RecF (370 aa).

30–37 (GPNGSGKT) contributes to the ATP binding site.

This sequence belongs to the RecF family.

It localises to the cytoplasm. In terms of biological role, the RecF protein is involved in DNA metabolism; it is required for DNA replication and normal SOS inducibility. RecF binds preferentially to single-stranded, linear DNA. It also seems to bind ATP. The sequence is that of DNA replication and repair protein RecF from Prosthecochloris aestuarii (strain DSM 271 / SK 413).